We begin with the raw amino-acid sequence, 163 residues long: Putative C-type lectin protein FPV239 (163 aa).

The C-type lectin domain maps to 48 to 159 (CKEGWVGYNK…CFLPKKWICR (112 aa)). 2 disulfide bridges follow: C76-C158 and C137-C150.

The chain is Putative C-type lectin protein FPV239 from Fowlpox virus (strain NVSL) (FPV).